A 60-amino-acid chain; its full sequence is Cytotoxin 2 (60 aa).

Intrachain disulfides connect Cys-3/Cys-21, Cys-14/Cys-38, Cys-42/Cys-53, and Cys-54/Cys-59.

The protein belongs to the three-finger toxin family. Short-chain subfamily. Type IA cytotoxin sub-subfamily. Monomer in solution; Homodimer and oligomer in the presence of negatively charged lipids forming a pore with a size ranging between 20 and 30 Angstroms. As to expression, expressed by the venom gland.

It is found in the secreted. It localises to the target cell membrane. In terms of biological role, shows cytolytic activity on many different cells by forming pore in lipid membranes. In vivo, increases heart rate or kills the animal by cardiac arrest. In addition, it binds to heparin with high affinity, interacts with Kv channel-interacting protein 1 (KCNIP1) in a calcium-independent manner, and binds to integrin alpha-V/beta-3 (ITGAV/ITGB3) with moderate affinity. The polypeptide is Cytotoxin 2 (Naja annulifera (Banded Egyptian cobra)).